The primary structure comprises 257 residues: Probable oxidoreductase yanE (257 aa).

The protein belongs to the oxidoreductase OpS7 family.

The protein operates within secondary metabolite biosynthesis; terpenoid biosynthesis. Functionally, part of the gene cluster that mediates the biosynthesis of yanuthone D, a fungal isoprenoid epoxycyclohexenone that acts as an antibiotic against fungi and bacteria. The first step of the pathway is the synthesis of 6-methylsalicylic acid (6-MSA) by the polyketide synthase yanA. 6-MSA is then converted to m-cresol by the decarboxylase yanB. The cytochrome P450 monooxygenase yanC then catalyzes the oxidation of m-cresol to toluquinol. Epoxidation of toluquinol is then performed by the short chain dehydrogenase yanD, with the help of yanE, and a further prenylation by yanG leads to 7-deacetoxyyanuthone A. The next step is the hydroxylation of C-22 of 7-deacetoxyyanuthone A by the cytochrome P450 monooxygenase yanH to yield 22-deacetylyanuthone A. O-Mevalon transferase yanI then attaches mevalon to the hydroxyl group of 22-deacetylyanuthone A to produce yanuthone E. Finally, the FAD-dependent monooxygenase yanF oxidizes the hydroxyl group at C15 of yanuthone E to form yanuthone D. Furthermore, several branching points in the pathway lead to the production of yanuthones F and G from 7-deacetoxyyanuthone A; yanuthones H and I from 22-deacetylyanuthone A; and yanuthone J from yanuthone E. YanE is also involved in the synthesis of yanuthone X1 which does not have 6-methylsalicylic acid (6-MSA) as precursor. This chain is Probable oxidoreductase yanE, found in Aspergillus niger (strain ATCC 1015 / CBS 113.46 / FGSC A1144 / LSHB Ac4 / NCTC 3858a / NRRL 328 / USDA 3528.7).